The primary structure comprises 595 residues: Aspartate--tRNA(Asp/Asn) ligase (595 aa).

Glu-175 lines the L-aspartate pocket. The interval 199 to 202 (QQYK) is aspartate. L-aspartate contacts are provided by Arg-221 and His-454. 221-223 (RDE) lines the ATP pocket. Residue Glu-488 coordinates ATP. Arg-495 contributes to the L-aspartate binding site. 540-543 (GIDR) contributes to the ATP binding site.

Belongs to the class-II aminoacyl-tRNA synthetase family. Type 1 subfamily. Homodimer.

It is found in the cytoplasm. The enzyme catalyses tRNA(Asx) + L-aspartate + ATP = L-aspartyl-tRNA(Asx) + AMP + diphosphate. Its function is as follows. Aspartyl-tRNA synthetase with relaxed tRNA specificity since it is able to aspartylate not only its cognate tRNA(Asp) but also tRNA(Asn). Reaction proceeds in two steps: L-aspartate is first activated by ATP to form Asp-AMP and then transferred to the acceptor end of tRNA(Asp/Asn). The sequence is that of Aspartate--tRNA(Asp/Asn) ligase from Brucella anthropi (strain ATCC 49188 / DSM 6882 / CCUG 24695 / JCM 21032 / LMG 3331 / NBRC 15819 / NCTC 12168 / Alc 37) (Ochrobactrum anthropi).